A 341-amino-acid chain; its full sequence is Protein pelota homolog (341 aa).

It belongs to the eukaryotic release factor 1 family. Pelota subfamily. As to quaternary structure, monomer. The cofactor is a divalent metal cation.

The protein resides in the cytoplasm. In terms of biological role, may function in recognizing stalled ribosomes, interact with stem-loop structures in stalled mRNA molecules, and effect endonucleolytic cleavage of the mRNA. May play a role in the release non-functional ribosomes and degradation of damaged mRNAs. Has endoribonuclease activity. The sequence is that of Protein pelota homolog from Metallosphaera sedula (strain ATCC 51363 / DSM 5348 / JCM 9185 / NBRC 15509 / TH2).